Consider the following 286-residue polypeptide: Aldo-keto reductase MAP_4149 (286 aa).

The active-site Proton donor is the Y61. Residues L201, V203, V239, R241, S242, R247, and N251 each coordinate NADPH.

This sequence belongs to the aldo/keto reductase family.

The polypeptide is Aldo-keto reductase MAP_4149 (Mycolicibacterium paratuberculosis (strain ATCC BAA-968 / K-10) (Mycobacterium paratuberculosis)).